A 234-amino-acid chain; its full sequence is Heme-copper oxidase subunit 2 (234 aa).

2 consecutive transmembrane segments (helical) span residues 13-33 (LFLLFTAVGVLAAGTVTAFFI) and 72-92 (LLFVTGIIVMGLIVATIDETL). Positions 151, 188, 192, and 196 each coordinate Cu cation.

Belongs to the cytochrome c oxidase subunit 2 family.

It is found in the cell membrane. The sequence is that of Heme-copper oxidase subunit 2 (aoxA) from Aeropyrum pernix (strain ATCC 700893 / DSM 11879 / JCM 9820 / NBRC 100138 / K1).